A 100-amino-acid polypeptide reads, in one-letter code: Large ribosomal subunit protein bL27 (100 aa).

The propeptide occupies 1–9 (MIIMNLQIF). The segment at 13-32 (KGMGSSKNGRDSESKRLGTK) is disordered.

The protein belongs to the bacterial ribosomal protein bL27 family. The N-terminus is cleaved by ribosomal processing cysteine protease Prp.

This Clostridium kluyveri (strain ATCC 8527 / DSM 555 / NBRC 12016 / NCIMB 10680 / K1) protein is Large ribosomal subunit protein bL27.